Reading from the N-terminus, the 95-residue chain is Antitoxin TacA1 (95 aa).

Residues 59 to 95 (FNFNDEQYEEFINLLDAPVADDPVIEKLLARKPQWDV) are neutralization domain.

This sequence belongs to the TacA antitoxin family. Homodimer. Forms a complex with cognate toxin TacT1. Forms a 4:2 antitoxin:toxin complex with cognate toxin TacT1.

Functionally, antitoxin component of a type II toxin-antitoxin (TA) system. Counteracts the toxic effect of cognate toxin TacT1 (T8), but not TacT2 or TacT3. Plays a role in persister cell formation. The TacA1-TacT1 complex binds (and probably represses) its own promoter DNA but not that of tacA3-tacT3, it does not repress the tacA3-tacT3 promoter. This Salmonella typhimurium (strain 14028s / SGSC 2262) protein is Antitoxin TacA1.